A 485-amino-acid chain; its full sequence is MGGRSGDLLDRRTSRRGFTCVLEFSDSDTNVDPVSVLMGNESAFIGKINNDDFKKMCSRMNWNEDRGTAYIESVVGAPFYDLSDPVVVSHTRANKLITSPVSYNELVVWTQGKIRDSETDKLLGPTATNEALKTLLGSEVSANIIWKANSLEYSVPKLTALYAKGDRSIPHIFWTKQTLEFNSPQCHEWSAMDEISKNDPLDPLVMWPYLEEDEERTLKDLHTEIRIWYSLRTGRNPVKQTVSAAPSKSTLEYVPWVTRNMSYRSLPVQISYQSSHGLLWRGNRPQLYSSTLFGDNTVELTPYDMSQPYVNNDPFVEMIPFNREIHNDYDFCWKQLNDEYFMRKLPAQGEDSSNMFVVGDSTFFLGMGSVAIAWATTLGAGAGIHQRKIRQVVARRYKTDDVSGHALSALLMHSSHFYWYLYEIYLNHKSSKSVYAFPFREQKSGRYHSISEYKGALDAALQLNLPDFAIKRLGQFTKFLKKLDL.

In Micromonas pusilla (Picoplanktonic green alga), this protein is Putative non-structural protein 1 (S7).